A 323-amino-acid chain; its full sequence is tRNA dimethylallyltransferase (323 aa).

12–19 (GPTAAGKT) provides a ligand contact to ATP. Substrate is bound at residue 14–19 (TAAGKT). Interaction with substrate tRNA regions lie at residues 37–40 (DSAL) and 161–165 (QRLMR).

Belongs to the IPP transferase family. Monomer. It depends on Mg(2+) as a cofactor.

It carries out the reaction adenosine(37) in tRNA + dimethylallyl diphosphate = N(6)-dimethylallyladenosine(37) in tRNA + diphosphate. Catalyzes the transfer of a dimethylallyl group onto the adenine at position 37 in tRNAs that read codons beginning with uridine, leading to the formation of N6-(dimethylallyl)adenosine (i(6)A). This Pseudomonas aeruginosa (strain LESB58) protein is tRNA dimethylallyltransferase.